Consider the following 224-residue polypeptide: UPF0758 protein PLES_57141 (224 aa).

The MPN domain occupies 102–224 (ILESPQAVRD…PLSLAEYGWL (123 aa)). Residues His-173, His-175, and Asp-186 each coordinate Zn(2+). A JAMM motif motif is present at residues 173-186 (HNHPSGDARPSLAD).

Belongs to the UPF0758 family.

The sequence is that of UPF0758 protein PLES_57141 from Pseudomonas aeruginosa (strain LESB58).